The sequence spans 479 residues: Adenosylhomocysteinase (479 aa).

The substrate site is built by threonine 65, aspartate 144, and glutamate 204. Residue 205 to 207 coordinates NAD(+); that stretch reads TTT. Substrate-binding residues include lysine 234 and aspartate 238. NAD(+)-binding positions include asparagine 239, 268–273, glutamate 291, asparagine 326, 347–349, and asparagine 392; these read GYGDVG and IGH.

Belongs to the adenosylhomocysteinase family. NAD(+) serves as cofactor.

The protein localises to the cytoplasm. The enzyme catalyses S-adenosyl-L-homocysteine + H2O = L-homocysteine + adenosine. Its pathway is amino-acid biosynthesis; L-homocysteine biosynthesis; L-homocysteine from S-adenosyl-L-homocysteine: step 1/1. May play a key role in the regulation of the intracellular concentration of adenosylhomocysteine. The sequence is that of Adenosylhomocysteinase from Variovorax paradoxus (strain S110).